A 165-amino-acid chain; its full sequence is C-phycoerythrin class 2 subunit alpha (165 aa).

A phycourobilin-binding site is contributed by C75. The (2R,3E)-phycoerythrobilin site is built by C83 and C140.

The protein belongs to the phycobiliprotein family. Heterodimer of an alpha and a beta chain. Post-translationally, contains two covalently linked phycoerythrobilin chromophores and one covalently linked phycourobilin chromophore.

It is found in the cellular thylakoid membrane. Light-harvesting photosynthetic bile pigment-protein from the phycobiliprotein complex. This Synechococcus sp. (strain WH8020) protein is C-phycoerythrin class 2 subunit alpha (mpeA).